The following is a 183-amino-acid chain: Bifunctional protein PyrR (183 aa).

The short motif at valine 102–threonine 114 is the PRPP-binding element.

It belongs to the purine/pyrimidine phosphoribosyltransferase family. PyrR subfamily. As to quaternary structure, homodimer and homohexamer; in equilibrium.

The catalysed reaction is UMP + diphosphate = 5-phospho-alpha-D-ribose 1-diphosphate + uracil. Functionally, regulates transcriptional attenuation of the pyrimidine nucleotide (pyr) operon by binding in a uridine-dependent manner to specific sites on pyr mRNA. This disrupts an antiterminator hairpin in the RNA and favors formation of a downstream transcription terminator, leading to a reduced expression of downstream genes. Also displays a weak uracil phosphoribosyltransferase activity which is not physiologically significant. This chain is Bifunctional protein PyrR, found in Listeria welshimeri serovar 6b (strain ATCC 35897 / DSM 20650 / CCUG 15529 / CIP 8149 / NCTC 11857 / SLCC 5334 / V8).